Consider the following 719-residue polypeptide: Pesticidal crystal protein Cry1Ic (719 aa).

This sequence belongs to the delta endotoxin family.

In terms of biological role, promotes colloidosmotic lysis by binding to the midgut epithelial cells of insects. In Bacillus thuringiensis, this protein is Pesticidal crystal protein Cry1Ic (cry1Ic).